We begin with the raw amino-acid sequence, 84 residues long: uncharacterized protein (84 aa).

The tract at residues 8–47 is cysteine motif; the sequence is CECCDRDLPPDSGDAMICTFECTFCAGCAETKLGGTCPNC.

This is an uncharacterized protein from Rhizobium meliloti (strain 1021) (Ensifer meliloti).